The following is a 38-amino-acid chain: Photosystem II reaction center protein L (38 aa).

The helical transmembrane segment at 17 to 37 (SLYWGLLLIFVLAVLFSNYFF) threads the bilayer.

The protein belongs to the PsbL family. In terms of assembly, PSII is composed of 1 copy each of membrane proteins PsbA, PsbB, PsbC, PsbD, PsbE, PsbF, PsbH, PsbI, PsbJ, PsbK, PsbL, PsbM, PsbT, PsbX, PsbY, PsbZ, Psb30/Ycf12, at least 3 peripheral proteins of the oxygen-evolving complex and a large number of cofactors. It forms dimeric complexes.

The protein resides in the plastid. Its subcellular location is the chloroplast thylakoid membrane. One of the components of the core complex of photosystem II (PSII). PSII is a light-driven water:plastoquinone oxidoreductase that uses light energy to abstract electrons from H(2)O, generating O(2) and a proton gradient subsequently used for ATP formation. It consists of a core antenna complex that captures photons, and an electron transfer chain that converts photonic excitation into a charge separation. This subunit is found at the monomer-monomer interface and is required for correct PSII assembly and/or dimerization. The polypeptide is Photosystem II reaction center protein L (Huperzia lucidula (Shining clubmoss)).